Reading from the N-terminus, the 114-residue chain is MQQLITEITKGQLKTDLPSFRPGDTLRVHVKVVEGTRERIQLFEGVVIKRRGGGISETFTVRKISYGVGVERTFPVHTPRIANIEVLRRGKVRRAKLYYLRNLRGKKARIKEIR.

The protein belongs to the bacterial ribosomal protein bL19 family.

In terms of biological role, this protein is located at the 30S-50S ribosomal subunit interface and may play a role in the structure and function of the aminoacyl-tRNA binding site. The chain is Large ribosomal subunit protein bL19 from Bacillus mycoides (strain KBAB4) (Bacillus weihenstephanensis).